The sequence spans 643 residues: Type VI secretion system spike protein VgrG1a (643 aa).

The protein belongs to the VgrG protein family. As to quaternary structure, forms homotrimers. Part of the type VI secretion system (T6SS). Interacts with EagT6 and Tse6; these interactions are required for Tse6 loading onto VgrG1. Interacts with Hcp1.

Its subcellular location is the secreted. Part of the H1 type VI secretion system (H1-T6SS) specialized secretion system, which delivers several virulence factors in both prokaryotic and eukaryotic cells during infection. Forms the spike at the tip of the elongating tube formed by haemolysin co-regulated protein 1/Hcp1. Allows the delivery of the Tse6 toxin to target cells where it exerts its toxicity. The polypeptide is Type VI secretion system spike protein VgrG1a (Pseudomonas aeruginosa (strain ATCC 15692 / DSM 22644 / CIP 104116 / JCM 14847 / LMG 12228 / 1C / PRS 101 / PAO1)).